A 143-amino-acid chain; its full sequence is 3-dehydroquinate dehydratase (143 aa).

Residue Y22 is the Proton acceptor of the active site. Residues N73, H79, and D86 each coordinate substrate. H99 acts as the Proton donor in catalysis. Substrate-binding positions include 100–101 (IS) and R110.

This sequence belongs to the type-II 3-dehydroquinase family. As to quaternary structure, homododecamer.

It carries out the reaction 3-dehydroquinate = 3-dehydroshikimate + H2O. It participates in metabolic intermediate biosynthesis; chorismate biosynthesis; chorismate from D-erythrose 4-phosphate and phosphoenolpyruvate: step 3/7. Functionally, catalyzes a trans-dehydration via an enolate intermediate. In Mycobacterium avium (strain 104), this protein is 3-dehydroquinate dehydratase.